We begin with the raw amino-acid sequence, 428 residues long: Bifunctional protein GlmU (428 aa).

Residues 1-221 are pyrophosphorylase; sequence MDIVILAAGC…ERKAMGINTR (221 aa). UDP-N-acetyl-alpha-D-glucosamine-binding positions include 6–9, K20, Q74, 79–80, 103–105, G140, and N219; these read LAAG, GT, and YGD. Position 105 (D105) interacts with Mg(2+). N219 is a binding site for Mg(2+). The interval 222–242 is linker; it reads ADLAIAESYFQCMKRASFLQS. An N-acetyltransferase region spans residues 243–428; that stretch reads GVTLTSPDQV…TTKPEYKTRR (186 aa). UDP-N-acetyl-alpha-D-glucosamine is bound by residues R308 and K326. The active-site Proton acceptor is the H338. UDP-N-acetyl-alpha-D-glucosamine is bound by residues Y341 and N352. Acetyl-CoA is bound by residues A355, 361-362, A398, and R415; that span reads NY.

This sequence in the N-terminal section; belongs to the N-acetylglucosamine-1-phosphate uridyltransferase family. It in the C-terminal section; belongs to the transferase hexapeptide repeat family. As to quaternary structure, homotrimer. Mg(2+) serves as cofactor.

The protein resides in the cytoplasm. The enzyme catalyses alpha-D-glucosamine 1-phosphate + acetyl-CoA = N-acetyl-alpha-D-glucosamine 1-phosphate + CoA + H(+). It carries out the reaction N-acetyl-alpha-D-glucosamine 1-phosphate + UTP + H(+) = UDP-N-acetyl-alpha-D-glucosamine + diphosphate. Its pathway is nucleotide-sugar biosynthesis; UDP-N-acetyl-alpha-D-glucosamine biosynthesis; N-acetyl-alpha-D-glucosamine 1-phosphate from alpha-D-glucosamine 6-phosphate (route II): step 2/2. The protein operates within nucleotide-sugar biosynthesis; UDP-N-acetyl-alpha-D-glucosamine biosynthesis; UDP-N-acetyl-alpha-D-glucosamine from N-acetyl-alpha-D-glucosamine 1-phosphate: step 1/1. It participates in bacterial outer membrane biogenesis; LPS lipid A biosynthesis. Functionally, catalyzes the last two sequential reactions in the de novo biosynthetic pathway for UDP-N-acetylglucosamine (UDP-GlcNAc). The C-terminal domain catalyzes the transfer of acetyl group from acetyl coenzyme A to glucosamine-1-phosphate (GlcN-1-P) to produce N-acetylglucosamine-1-phosphate (GlcNAc-1-P), which is converted into UDP-GlcNAc by the transfer of uridine 5-monophosphate (from uridine 5-triphosphate), a reaction catalyzed by the N-terminal domain. In Anaplasma marginale (strain Florida), this protein is Bifunctional protein GlmU.